A 206-amino-acid chain; its full sequence is Small ribosomal subunit protein uS4 (206 aa).

The region spanning 96 to 156 is the S4 RNA-binding domain; it reads CRLDNVVYRM…EKAKNQLRIV (61 aa).

Belongs to the universal ribosomal protein uS4 family. Part of the 30S ribosomal subunit. Contacts protein S5. The interaction surface between S4 and S5 is involved in control of translational fidelity.

One of the primary rRNA binding proteins, it binds directly to 16S rRNA where it nucleates assembly of the body of the 30S subunit. In terms of biological role, with S5 and S12 plays an important role in translational accuracy. The chain is Small ribosomal subunit protein uS4 from Pseudomonas savastanoi pv. phaseolicola (strain 1448A / Race 6) (Pseudomonas syringae pv. phaseolicola (strain 1448A / Race 6)).